The sequence spans 197 residues: UDP-N-acetylglucosamine transferase subunit ALG13 (197 aa).

This sequence belongs to the glycosyltransferase 28 family. Heterodimer with ALG14 to form a functional enzyme.

It is found in the endoplasmic reticulum. It carries out the reaction an N-acetyl-alpha-D-glucosaminyl-diphospho-di-trans,poly-cis-dolichol + UDP-N-acetyl-alpha-D-glucosamine = an N,N'-diacetylchitobiosyl-diphospho-di-trans,poly-cis-dolichol + UDP + H(+). Involved in protein N-glycosylation. Essential for the second step of the dolichol-linked oligosaccharide pathway. The sequence is that of UDP-N-acetylglucosamine transferase subunit ALG13 (ALG13) from Kluyveromyces lactis (strain ATCC 8585 / CBS 2359 / DSM 70799 / NBRC 1267 / NRRL Y-1140 / WM37) (Yeast).